Reading from the N-terminus, the 273-residue chain is Glutamate 5-kinase (273 aa).

Lys-15 provides a ligand contact to ATP. Substrate is bound by residues Ser-55, Asp-142, and Asn-158. Residues Ser-178 to Asp-179 and Thr-220 to Lys-226 each bind ATP.

This sequence belongs to the glutamate 5-kinase family.

Its subcellular location is the cytoplasm. It catalyses the reaction L-glutamate + ATP = L-glutamyl 5-phosphate + ADP. The protein operates within amino-acid biosynthesis; L-proline biosynthesis; L-glutamate 5-semialdehyde from L-glutamate: step 1/2. In terms of biological role, catalyzes the transfer of a phosphate group to glutamate to form L-glutamate 5-phosphate. The sequence is that of Glutamate 5-kinase from Streptococcus pyogenes serotype M3 (strain ATCC BAA-595 / MGAS315).